We begin with the raw amino-acid sequence, 575 residues long: Transcription factor COE2 (575 aa).

Residues 62 to 65 (RKSN) form an interaction with DNA region. The segment at 150–169 (CRVLLTHEVMCSRCCEKKSC) adopts a C5-type zinc-finger fold. Interaction with DNA stretches follow at residues 196-203 (NCLKTAGN) and 235-238 (NNSK). An IPT/TIG domain is found at 253–336 (PCIKAISPSE…KGAPGRFIYT (84 aa)). Polar residues predominate over residues 441-453 (STQGNNQGYIRNT). Positions 441–479 (STQGNNQGYIRNTSSISPRGYSSSSTPQQSNYSTSSNSM) are disordered. Positions 454 to 479 (SSISPRGYSSSSTPQQSNYSTSSNSM) are enriched in low complexity.

Belongs to the COE family. As to quaternary structure, forms either a homodimer or a heterodimer with a related family member. Interacts with SIX1.

Its subcellular location is the nucleus. Its function is as follows. Transcription factor that, in osteoblasts, activates the decoy receptor for RANKL, TNFRSF11B, which in turn regulates osteoclast differentiation. Acts in synergy with the Wnt-responsive LEF1/CTNNB1 pathway. Recognizes variations of the palindromic sequence 5'-ATTCCCNNGGGAATT-3'. This Homo sapiens (Human) protein is Transcription factor COE2 (EBF2).